The chain runs to 238 residues: Sugar fermentation stimulation protein homolog (238 aa).

Belongs to the SfsA family.

This Brucella abortus (strain S19) protein is Sugar fermentation stimulation protein homolog.